A 346-amino-acid chain; its full sequence is Guanine nucleotide-binding protein subunit beta-2 (346 aa).

7 WD repeats span residues 57 to 96 (GHIN…KVQV), 99 to 138 (LRSA…ASGV), 147 to 185 (GYEG…KTMD), 188 to 227 (GHAG…HKQM), 230 to 269 (GHEM…QIAL), 274 to 313 (QKNT…HNGM), and 316 to 346 (GHEN…RLWL).

Belongs to the WD repeat G protein beta family. As to quaternary structure, g proteins are composed of 3 units, alpha, beta and gamma. Interacts with Ggammae/Guanine nucleotide-binding protein subunit gamma-e.

In terms of biological role, guanine nucleotide-binding proteins (G proteins) are involved as modulators or transducers in various transmembrane signaling systems. The beta and gamma chains are required for the GTPase activity, for replacement of GDP by GTP, and for G protein-effector interaction. This chain is Guanine nucleotide-binding protein subunit beta-2, found in Calliphora vicina (Blue blowfly).